A 328-amino-acid chain; its full sequence is tRNA uridine(34) hydroxylase (328 aa).

The Rhodanese domain occupies 123–217 (SDPDVLLVDT…YLEEVPQEES (95 aa)). Cysteine 177 serves as the catalytic Cysteine persulfide intermediate.

Belongs to the TrhO family.

It catalyses the reaction uridine(34) in tRNA + AH2 + O2 = 5-hydroxyuridine(34) in tRNA + A + H2O. Its function is as follows. Catalyzes oxygen-dependent 5-hydroxyuridine (ho5U) modification at position 34 in tRNAs. This Psychromonas ingrahamii (strain DSM 17664 / CCUG 51855 / 37) protein is tRNA uridine(34) hydroxylase.